The sequence spans 328 residues: Twinfilin (328 aa).

Positions 1–137 (MSASVELKPT…DYQQIMKSLS (137 aa)) constitute an ADF-H 1 domain. At Ser-143 the chain carries Phosphoserine. The 132-residue stretch at 173-304 (GVAMSIDDKA…TEKEILHAAG (132 aa)) folds into the ADF-H 2 domain. The disordered stretch occupies residues 302 to 328 (AAGISSPQAETSTTKTGFSRPRPPRRR). The segment covering 306-318 (SSPQAETSTTKTG) has biased composition (polar residues).

Belongs to the actin-binding proteins ADF family. Twinfilin subfamily. Interacts with G-actin; ADP-actin form.

Its subcellular location is the cytoplasm. The protein localises to the cytoskeleton. Functionally, actin-binding protein involved in motile and morphological processes. Inhibits actin polymerization, likely by sequestering G-actin. Prevents actin filament assembly by forming a 1:1 complex with actin monomers, and inhibits the nucleotide exchange reaction of actin monomers. The protein is Twinfilin (twf1) of Schizosaccharomyces pombe (strain 972 / ATCC 24843) (Fission yeast).